Here is a 281-residue protein sequence, read N- to C-terminus: DegV domain-containing protein SCO2569 (281 aa).

The DegV domain maps to 5–280; sequence VAIVTDSTAY…PGLLGVVVSS (276 aa). Residues threonine 62 and serine 95 each coordinate hexadecanoate.

In terms of biological role, may bind long-chain fatty acids, such as palmitate, and may play a role in lipid transport or fatty acid metabolism. In Streptomyces coelicolor (strain ATCC BAA-471 / A3(2) / M145), this protein is DegV domain-containing protein SCO2569.